Consider the following 729-residue polypeptide: Transketolase (729 aa).

Residue His97 participates in substrate binding. Thiamine diphosphate is bound by residues His138 and 186–188; that span reads GPL. Mg(2+) is bound at residue Asp227. The thiamine diphosphate site is built by Gly228 and Asn257. Mg(2+) contacts are provided by Asn257 and Ile259. Residues His332, Arg423, and Ser450 each contribute to the substrate site. A thiamine diphosphate-binding site is contributed by His332. Glu477 (proton donor) is an active-site residue. Phe503 is a thiamine diphosphate binding site. His527, Asp535, and Arg586 together coordinate substrate.

This sequence belongs to the transketolase family. As to quaternary structure, homodimer. Mg(2+) is required as a cofactor. It depends on Ca(2+) as a cofactor. Mn(2+) serves as cofactor. The cofactor is Co(2+). Requires thiamine diphosphate as cofactor.

The enzyme catalyses D-sedoheptulose 7-phosphate + D-glyceraldehyde 3-phosphate = aldehydo-D-ribose 5-phosphate + D-xylulose 5-phosphate. Catalyzes the transfer of a two-carbon ketol group from a ketose donor to an aldose acceptor, via a covalent intermediate with the cofactor thiamine pyrophosphate. The chain is Transketolase from Streptococcus pyogenes serotype M6 (strain ATCC BAA-946 / MGAS10394).